Here is a 1224-residue protein sequence, read N- to C-terminus: Protein MSN5 (1224 aa).

The disordered stretch occupies residues 1200 to 1224 (NKENGDMLDDPNIEDGAVGNLFDDN).

Interacts with CEX1.

This chain is Protein MSN5 (MSN5), found in Saccharomyces cerevisiae (strain ATCC 204508 / S288c) (Baker's yeast).